A 413-amino-acid chain; its full sequence is MKIYLVGGAVRDALLGLPVKDKDWVVVGATPQEMLDAGYQQVGRDFPVFLHPQTHEEYALARTERKSGSGYTGFTCYAAPDVTLEADLQRRDLTINALARDDDGQIIDPYHGRRDLEARLLRHVSPAFGEDPLRVLRVARFAARYAHLSFRIADETLALMREMTAAGELEHLTPERVWKETENALTTRNPQVYFQVLRDCGALRVLFPEIDALFGVPAPAKWHPEIDTGVHTLMTLSMAAMLSPQLDVRFATLCHDLGKGLTPKNLWPRHHGHGPAGVKLVEQLCQRLRVPNDLRDLAKLVAEYHDLIHTFPILQPKTIVKLFDAIDAWRKPQRVEQIALTSEADVRGRTGFEASDYPQGRWLREAWQVAQAVPTKEVVEAGFKGIEIREELTKRRIAAVANWKEKRCPNPAS.

ATP is bound by residues Gly8 and Arg11. The CTP site is built by Gly8 and Arg11. The Mg(2+) site is built by Asp21 and Asp23. ATP contacts are provided by Arg91, Arg137, and Arg140. Residues Arg91, Arg137, and Arg140 each coordinate CTP. The HD domain occupies 228-329 (TGVHTLMTLS…VKLFDAIDAW (102 aa)).

Belongs to the tRNA nucleotidyltransferase/poly(A) polymerase family. Bacterial CCA-adding enzyme type 1 subfamily. Monomer. Can also form homodimers and oligomers. Mg(2+) serves as cofactor. Ni(2+) is required as a cofactor.

It catalyses the reaction a tRNA precursor + 2 CTP + ATP = a tRNA with a 3' CCA end + 3 diphosphate. The catalysed reaction is a tRNA with a 3' CCA end + 2 CTP + ATP = a tRNA with a 3' CCACCA end + 3 diphosphate. Catalyzes the addition and repair of the essential 3'-terminal CCA sequence in tRNAs without using a nucleic acid template. Adds these three nucleotides in the order of C, C, and A to the tRNA nucleotide-73, using CTP and ATP as substrates and producing inorganic pyrophosphate. tRNA 3'-terminal CCA addition is required both for tRNA processing and repair. Also involved in tRNA surveillance by mediating tandem CCA addition to generate a CCACCA at the 3' terminus of unstable tRNAs. While stable tRNAs receive only 3'-terminal CCA, unstable tRNAs are marked with CCACCA and rapidly degraded. In Salmonella agona (strain SL483), this protein is Multifunctional CCA protein.